Consider the following 143-residue polypeptide: D-aminoacyl-tRNA deacylase (143 aa).

The Gly-cisPro motif, important for rejection of L-amino acids signature appears at 135-136; it reads GP.

It belongs to the DTD family. Homodimer.

It is found in the cytoplasm. The catalysed reaction is glycyl-tRNA(Ala) + H2O = tRNA(Ala) + glycine + H(+). The enzyme catalyses a D-aminoacyl-tRNA + H2O = a tRNA + a D-alpha-amino acid + H(+). An aminoacyl-tRNA editing enzyme that deacylates mischarged D-aminoacyl-tRNAs. Also deacylates mischarged glycyl-tRNA(Ala), protecting cells against glycine mischarging by AlaRS. Acts via tRNA-based rather than protein-based catalysis; rejects L-amino acids rather than detecting D-amino acids in the active site. By recycling D-aminoacyl-tRNA to D-amino acids and free tRNA molecules, this enzyme counteracts the toxicity associated with the formation of D-aminoacyl-tRNA entities in vivo and helps enforce protein L-homochirality. The chain is D-aminoacyl-tRNA deacylase from Mycolicibacterium gilvum (strain PYR-GCK) (Mycobacterium gilvum (strain PYR-GCK)).